Here is a 418-residue protein sequence, read N- to C-terminus: Gamma-glutamyl phosphate reductase (418 aa).

Belongs to the gamma-glutamyl phosphate reductase family.

The protein resides in the cytoplasm. The enzyme catalyses L-glutamate 5-semialdehyde + phosphate + NADP(+) = L-glutamyl 5-phosphate + NADPH + H(+). It functions in the pathway amino-acid biosynthesis; L-proline biosynthesis; L-glutamate 5-semialdehyde from L-glutamate: step 2/2. Functionally, catalyzes the NADPH-dependent reduction of L-glutamate 5-phosphate into L-glutamate 5-semialdehyde and phosphate. The product spontaneously undergoes cyclization to form 1-pyrroline-5-carboxylate. This chain is Gamma-glutamyl phosphate reductase, found in Halothermothrix orenii (strain H 168 / OCM 544 / DSM 9562).